Consider the following 101-residue polypeptide: RNA-3 uncharacterized 11.6 kDa protein (101 aa).

This Beet necrotic yellow vein mosaic virus (isolate Yugoslavia/G1) (BNYVV) protein is RNA-3 uncharacterized 11.6 kDa protein.